Reading from the N-terminus, the 261-residue chain is Type III pantothenate kinase (261 aa).

An ATP-binding site is contributed by 6–13; it reads DAGNTNVV. 108 to 111 contacts substrate; the sequence is GADR. The active-site Proton acceptor is the D110. D130 contributes to the K(+) binding site. Position 133 (T133) interacts with ATP. Position 185 (T185) interacts with substrate.

The protein belongs to the type III pantothenate kinase family. Homodimer. It depends on NH4(+) as a cofactor. K(+) is required as a cofactor.

Its subcellular location is the cytoplasm. It carries out the reaction (R)-pantothenate + ATP = (R)-4'-phosphopantothenate + ADP + H(+). It functions in the pathway cofactor biosynthesis; coenzyme A biosynthesis; CoA from (R)-pantothenate: step 1/5. Catalyzes the phosphorylation of pantothenate (Pan), the first step in CoA biosynthesis. The sequence is that of Type III pantothenate kinase from Rhodospirillum centenum (strain ATCC 51521 / SW).